The following is a 212-amino-acid chain: MTSQRTRERLIQRLCEEGVSNTKVLDVIRRTPRHLFVDEALAHRAYEDTALPIGHNQTISQPFMVAHMSELLLEAGPLDKVLEIGTGSGYQTAILAQLVERVFSVERIKVLQDRAKERLVELNLRNVVFRWGDGCEGWPALAPYNGIIVTAVAPEVPQALLDQLAPGGRMVIPVGPAGEAQQLMLIVREEHGFSRRVLGAVRFVPLLNGPLA.

Serine 60 is a catalytic residue.

The protein belongs to the methyltransferase superfamily. L-isoaspartyl/D-aspartyl protein methyltransferase family.

It is found in the cytoplasm. The catalysed reaction is [protein]-L-isoaspartate + S-adenosyl-L-methionine = [protein]-L-isoaspartate alpha-methyl ester + S-adenosyl-L-homocysteine. In terms of biological role, catalyzes the methyl esterification of L-isoaspartyl residues in peptides and proteins that result from spontaneous decomposition of normal L-aspartyl and L-asparaginyl residues. It plays a role in the repair and/or degradation of damaged proteins. The protein is Protein-L-isoaspartate O-methyltransferase of Pseudomonas putida (strain ATCC 700007 / DSM 6899 / JCM 31910 / BCRC 17059 / LMG 24140 / F1).